The chain runs to 319 residues: D-alanine--D-alanine ligase (319 aa).

In terms of domain architecture, ATP-grasp spans 120–315 (KRVLAQAGVP…YPELLRRLVE (196 aa)). 147-198 (DPPFFVKPANTGSSVGISRVERFQDLEAALALAFRYDEKAVVEKALSPVREL) contributes to the ATP binding site. Mg(2+)-binding residues include Asp270, Glu282, and Asn284.

The protein belongs to the D-alanine--D-alanine ligase family. The cofactor is Mg(2+). Mn(2+) serves as cofactor.

The protein localises to the cytoplasm. It catalyses the reaction 2 D-alanine + ATP = D-alanyl-D-alanine + ADP + phosphate + H(+). It participates in cell wall biogenesis; peptidoglycan biosynthesis. Its function is as follows. Cell wall formation. This chain is D-alanine--D-alanine ligase, found in Thermus thermophilus (strain ATCC 27634 / DSM 579 / HB8).